The chain runs to 508 residues: GMP synthase [glutamine-hydrolyzing] (508 aa).

Residues 1-189 (MILVLDFGSQ…ALLVCGCEKT (189 aa)) enclose the Glutamine amidotransferase type-1 domain. Cysteine 78 functions as the Nucleophile in the catalytic mechanism. Residues histidine 163 and glutamate 165 contribute to the active site. The 194-residue stretch at 190–383 (WGMQHFAQRE…LGVSQDFLMR (194 aa)) folds into the GMPS ATP-PPase domain. Position 217 to 223 (217 to 223 (SGGVDST)) interacts with ATP.

As to quaternary structure, homodimer.

It carries out the reaction XMP + L-glutamine + ATP + H2O = GMP + L-glutamate + AMP + diphosphate + 2 H(+). It functions in the pathway purine metabolism; GMP biosynthesis; GMP from XMP (L-Gln route): step 1/1. Catalyzes the synthesis of GMP from XMP. The protein is GMP synthase [glutamine-hydrolyzing] of Helicobacter pylori (strain P12).